Reading from the N-terminus, the 518-residue chain is Dihydro-ML-236C monooxygenase mlcC (518 aa).

Residues 1–31 are Cytoplasmic-facing; it reads MLGQVLLTVESYQWVSTPQALVAVAVLLSLI. The helical; Signal-anchor for type II membrane protein transmembrane segment at 32–48 threads the bilayer; the sequence is AYRLRGRQSELQVYNPK. Over 49–518 the chain is Lumenal; sequence KWWELTTMRA…EDIPLPHDRC (470 aa). Cys454 provides a ligand contact to heme.

The protein belongs to the cytochrome P450 family. Heme serves as cofactor.

It is found in the endoplasmic reticulum membrane. It carries out the reaction dihydro-ML-236C carboxylate + reduced [NADPH--hemoprotein reductase] + O2 = ML-236C carboxylate + oxidized [NADPH--hemoprotein reductase] + 2 H2O + H(+). The catalysed reaction is ML-236C carboxylate + reduced [NADPH--hemoprotein reductase] + O2 = ML-236A carboxylate + oxidized [NADPH--hemoprotein reductase] + H2O + H(+). It participates in polyketide biosynthesis. Its function is as follows. Dihydro-ML-236C carboxylate monooxygenase; part of the gene cluster that mediates the biosynthesis of compactin, also known as mevastatin or ML-236B, and which acts as a potent competitive inhibitor of HMG-CoA reductase. Compactin biosynthesis is performed in two stages. The first stage is catalyzed by the nonaketide synthase mlcA, which belongs to type I polyketide synthases and catalyzes the iterative nine-step formation of the polyketide. This PKS stage is completed by the action of dehydrogenase mlcG, which catalyzes the NADPH-dependent reduction of the unsaturated tetra-, penta- and heptaketide intermediates that arise during the mlcA-mediated biosynthesis of the nonaketide chain and leads to dihydro-ML-236C carboxylate. Covalently bound dihydro-ML-236C carboxylate is released from mlcA by the mlcF esterase. Conversion of dihydro-ML-236C carboxylate into ML-236A carboxylate is subsequently performed with the participation of molecular oxygen and P450 monoogygenase mlcC. Finally, mlcH performs the conversion of ML-236A carboxylate to ML-236B/compactin carboxylate through the addition of the side-chain diketide moiety produced by the diketide synthase mlcB. This is Dihydro-ML-236C monooxygenase mlcC from Penicillium citrinum.